A 320-amino-acid chain; its full sequence is o-succinylbenzoate synthase (320 aa).

Lysine 133 serves as the catalytic Proton donor. Residues aspartate 161, glutamate 190, and aspartate 213 each contribute to the Mg(2+) site. Lysine 235 acts as the Proton acceptor in catalysis.

It belongs to the mandelate racemase/muconate lactonizing enzyme family. MenC type 1 subfamily. It depends on a divalent metal cation as a cofactor.

It catalyses the reaction (1R,6R)-6-hydroxy-2-succinyl-cyclohexa-2,4-diene-1-carboxylate = 2-succinylbenzoate + H2O. It functions in the pathway quinol/quinone metabolism; 1,4-dihydroxy-2-naphthoate biosynthesis; 1,4-dihydroxy-2-naphthoate from chorismate: step 4/7. Its pathway is quinol/quinone metabolism; menaquinone biosynthesis. Functionally, converts 2-succinyl-6-hydroxy-2,4-cyclohexadiene-1-carboxylate (SHCHC) to 2-succinylbenzoate (OSB). The protein is o-succinylbenzoate synthase of Salmonella agona (strain SL483).